An 87-amino-acid chain; its full sequence is uncharacterized protein (87 aa).

The N-terminal stretch at 1 to 22 (MKIKTTVAALSVLSVLSFGAFA) is a signal peptide.

This sequence belongs to the BhsA/McbA family.

Its subcellular location is the periplasm. This is an uncharacterized protein from Escherichia coli O6:H1 (strain CFT073 / ATCC 700928 / UPEC).